We begin with the raw amino-acid sequence, 931 residues long: Elicitor of plant defense protein 1 (931 aa).

The disordered stretch occupies residues 13–32; that stretch reads NYNSVIPPPEPLNTDPDMHP. Positions 19-277 constitute a uDENN domain; the sequence is PPPEPLNTDP…NLCTEAFNPL (259 aa). One can recognise a cDENN domain in the interval 301–433; that stretch reads EIPGSRSIDL…ARRKLMSLLQ (133 aa). The dDENN domain maps to 435-799; sequence AAPHKLRYGV…DREMQPANNA (365 aa). 2 disordered regions span residues 478–552 and 566–586; these read LGKW…SRSD and SGHFGEEKMRRSSSFGIDKHP. Polar residues predominate over residues 521–537; it reads TSKSGKTSPQSSVSPVS. The span at 566 to 575 shows a compositional bias: basic and acidic residues; that stretch reads SGHFGEEKMR. The segment at 666 to 714 adopts a Phorbol-ester/DAG-type zinc-finger fold; sequence GHCFNWIPKDNTSICNICNDHAEGDGIYKCTGCKIFSHGRCLGHASLVC.

This sequence belongs to the EPD1 elicitor family.

The protein localises to the secreted. The protein resides in the host cell. Acts as an elicitor that triggers cell death and defense responses in the host plants. This is Elicitor of plant defense protein 1 from Fusarium odoratissimum (strain NRRL 54006).